The chain runs to 449 residues: Elongation factor 1-alpha (449 aa).

The region spanning 5–230 is the tr-type G domain; the sequence is KVHMNLVVVG…DMLEPPVRPS (226 aa). The segment at 14-21 is G1; it reads GHVDAGKS. 14 to 21 is a binding site for GTP; the sequence is GHVDAGKS. The segment at 70-74 is G2; that stretch reads GITID. The G3 stretch occupies residues 91-94; that stretch reads DAPG. GTP is bound by residues 91-95 and 153-156; these read DAPGH and NKMD. The tract at residues 153–156 is G4; it reads NKMD. The G5 stretch occupies residues 194-196; that stretch reads SGW. The residue at position 362 (Glu-362) is a 5-glutamyl glycerylphosphorylethanolamine.

This sequence belongs to the TRAFAC class translation factor GTPase superfamily. Classic translation factor GTPase family. EF-Tu/EF-1A subfamily. In terms of processing, phosphatidylethanolamine (PE) is a direct precursor of the ethanolamine-phosphoglycerol (EPG) moiety.

It localises to the cytoplasm. Its function is as follows. This protein promotes the GTP-dependent binding of aminoacyl-tRNA to the A-site of ribosomes during protein biosynthesis. In Trypanosoma brucei brucei, this protein is Elongation factor 1-alpha (TEF1).